Reading from the N-terminus, the 159-residue chain is Ribonuclease P protein component 2 (159 aa).

This sequence belongs to the eukaryotic/archaeal RNase P protein component 2 family. Consists of a catalytic RNA component and at least 4-5 protein subunits.

The protein resides in the cytoplasm. The catalysed reaction is Endonucleolytic cleavage of RNA, removing 5'-extranucleotides from tRNA precursor.. In terms of biological role, part of ribonuclease P, a protein complex that generates mature tRNA molecules by cleaving their 5'-ends. The sequence is that of Ribonuclease P protein component 2 from Halorubrum lacusprofundi (strain ATCC 49239 / DSM 5036 / JCM 8891 / ACAM 34).